The following is a 126-amino-acid chain: Small ribosomal subunit protein uS13 (126 aa).

Positions 92-126 (HRRGLPVRGQRTKTNARTRKGPKRTVAGKKKAGRK) are disordered.

The protein belongs to the universal ribosomal protein uS13 family. In terms of assembly, part of the 30S ribosomal subunit. Forms a loose heterodimer with protein S19. Forms two bridges to the 50S subunit in the 70S ribosome.

Located at the top of the head of the 30S subunit, it contacts several helices of the 16S rRNA. In the 70S ribosome it contacts the 23S rRNA (bridge B1a) and protein L5 of the 50S subunit (bridge B1b), connecting the 2 subunits; these bridges are implicated in subunit movement. Contacts the tRNAs in the A and P-sites. In Kineococcus radiotolerans (strain ATCC BAA-149 / DSM 14245 / SRS30216), this protein is Small ribosomal subunit protein uS13.